Reading from the N-terminus, the 84-residue chain is Beta-defensin 119 (84 aa).

Residues 1–21 (MKLLYLFLAILLVIEEPVISG) form the signal peptide. 3 cysteine pairs are disulfide-bonded: C28-C55, C35-C49, and C39-C56.

It belongs to the beta-defensin family.

It localises to the secreted. Functionally, has antibacterial activity. The sequence is that of Beta-defensin 119 (DEFB119) from Pongo pygmaeus (Bornean orangutan).